Reading from the N-terminus, the 529-residue chain is Type I inositol polyphosphate 5-phosphatase 5 (529 aa).

Catalytic regions lie at residues D371–T386 and K451–E466.

Belongs to the inositol polyphosphate 5-phosphatase family.

Its function is as follows. May be involved in the regulation of root hairs development. Required for restricting both the size of the root-hair initiation site and the width of the root hairs during the transition to tip growth, but is not required for normal subsequent tip growth. This Arabidopsis thaliana (Mouse-ear cress) protein is Type I inositol polyphosphate 5-phosphatase 5.